A 159-amino-acid polypeptide reads, in one-letter code: 6,7-dimethyl-8-ribityllumazine synthase (159 aa).

5-amino-6-(D-ribitylamino)uracil is bound by residues Phe-23, Ser-61–Glu-63, and Ala-85–Ile-87. Asp-90 to Thr-91 provides a ligand contact to (2S)-2-hydroxy-3-oxobutyl phosphate. The Proton donor role is filled by His-93. Phe-118 contacts 5-amino-6-(D-ribitylamino)uracil. Residue Arg-132 participates in (2S)-2-hydroxy-3-oxobutyl phosphate binding.

This sequence belongs to the DMRL synthase family.

It catalyses the reaction (2S)-2-hydroxy-3-oxobutyl phosphate + 5-amino-6-(D-ribitylamino)uracil = 6,7-dimethyl-8-(1-D-ribityl)lumazine + phosphate + 2 H2O + H(+). It functions in the pathway cofactor biosynthesis; riboflavin biosynthesis; riboflavin from 2-hydroxy-3-oxobutyl phosphate and 5-amino-6-(D-ribitylamino)uracil: step 1/2. Functionally, catalyzes the formation of 6,7-dimethyl-8-ribityllumazine by condensation of 5-amino-6-(D-ribitylamino)uracil with 3,4-dihydroxy-2-butanone 4-phosphate. This is the penultimate step in the biosynthesis of riboflavin. This chain is 6,7-dimethyl-8-ribityllumazine synthase, found in Synechococcus sp. (strain RCC307).